Consider the following 253-residue polypeptide: uncharacterized protein (253 aa).

The N-terminal stretch at 1–19 (MRYLKKVTIYISLLILVSG) is a signal peptide. C20 carries the N-palmitoyl cysteine lipid modification. A lipid anchor (S-diacylglycerol cysteine) is attached at C20.

This sequence belongs to the staphylococcal tandem lipoprotein family.

The protein localises to the cell membrane. This is an uncharacterized protein from Staphylococcus epidermidis (strain ATCC 35984 / DSM 28319 / BCRC 17069 / CCUG 31568 / BM 3577 / RP62A).